The primary structure comprises 563 residues: Beta-catenin-like protein 1 (563 aa).

M1 is modified (N-acetylmethionine). Residues 1–49 (MDVGELLSYQPNRGTKRPRDDEEEEQKMRRKQTGTRERGRYREEEMTVV) form a disordered region. Positions 16–33 (KRPRDDEEEEQKMRRKQT) match the Nuclear localization signal motif. Residues 34-45 (GTRERGRYREEE) are compositionally biased toward basic and acidic residues. 2 HEAT repeats span residues 79 to 129 (ESSV…VVAT) and 134 to 176 (YHLL…TLHE). K91 bears the N6-acetyllysine mark. Residues 130-140 (MPDLYHLLVEL) carry the Nuclear export signal (NES) motif. ARM repeat units follow at residues 178 to 228 (EEGA…MAEF), 229 to 273 (RPEM…LQDN), 274 to 323 (DENR…CLML), 325 to 363 (SNRE…AMIG), and 364 to 417 (PEGT…LLRN). S389 carries the post-translational modification Phosphoserine. Residues 476–540 (DTEEEFYLRR…HIIKEYAENI (65 aa)) are a coiled coil. S545 is subject to Phosphoserine.

Component of the PRP19-CDC5L splicing complex composed of a core complex comprising a homotetramer of PRPF19, CDC5L, PLRG1 and BCAS2, and at least three less stably associated proteins CTNNBL1, CWC15 and HSPA8. Interacts directly with CWC15 and CDC5L in the complex. Interacts with AICDA; the interaction is important for the antibody diversification activity of AICDA. Interacts with PRPF31 (via its NLS). Interacts (via its N-terminal NLS) with KPNA1 and KPNA2. Widely expressed with highest levels in skeletal muscle, placenta, heart, spleen, testis and thyroid.

The protein localises to the nucleus. It is found in the cytoplasm. Component of the PRP19-CDC5L complex that forms an integral part of the spliceosome and is required for activating pre-mRNA splicing. Participates in AID/AICDA-mediated somatic hypermutation (SHM) and class-switch recombination (CSR), 2 processes resulting in the production of high-affinity, mutated isotype-switched antibodies. In Homo sapiens (Human), this protein is Beta-catenin-like protein 1 (CTNNBL1).